The chain runs to 476 residues: UDP-N-acetylmuramate--L-alanine ligase (476 aa).

Residue 115-121 (GTHGKTT) participates in ATP binding.

Belongs to the MurCDEF family.

It is found in the cytoplasm. It catalyses the reaction UDP-N-acetyl-alpha-D-muramate + L-alanine + ATP = UDP-N-acetyl-alpha-D-muramoyl-L-alanine + ADP + phosphate + H(+). It functions in the pathway cell wall biogenesis; peptidoglycan biosynthesis. Functionally, cell wall formation. The protein is UDP-N-acetylmuramate--L-alanine ligase of Paramagnetospirillum magneticum (strain ATCC 700264 / AMB-1) (Magnetospirillum magneticum).